Here is a 164-residue protein sequence, read N- to C-terminus: Protein 4 (164 aa).

This is Protein 4 from Lettuce big-vein associated virus (isolate Japan/Kagawa) (LBVaV).